The sequence spans 194 residues: PRELI domain containing protein 3B (194 aa).

The PRELI/MSF1 domain occupies 1 to 172 (MKIWTSEHVF…VIHKLNAEIE (172 aa)). Phosphoserine is present on residues S46 and S51.

This sequence belongs to the slowmo family.

This Macaca fascicularis (Crab-eating macaque) protein is PRELI domain containing protein 3B (PRELID3B).